Reading from the N-terminus, the 345-residue chain is Probable glucan endo-1,3-beta-glucosidase BG4 (345 aa).

Positions 1-22 (MLYSPKKLFLFFLSCIVLYVNS) are cleaved as a signal peptide. N-linked (GlcNAc...) asparagine glycosylation is found at Asn-23 and Asn-119. The active-site Proton donor is the Glu-128. Glu-267 functions as the Nucleophile in the catalytic mechanism. Asn-277 and Asn-306 each carry an N-linked (GlcNAc...) asparagine glycan.

Belongs to the glycosyl hydrolase 17 family.

The protein resides in the secreted. The enzyme catalyses Hydrolysis of (1-&gt;3)-beta-D-glucosidic linkages in (1-&gt;3)-beta-D-glucans.. Functionally, may play a role in plant defense against pathogens. In Arabidopsis thaliana (Mouse-ear cress), this protein is Probable glucan endo-1,3-beta-glucosidase BG4.